A 260-amino-acid polypeptide reads, in one-letter code: uncharacterized protein (260 aa).

The signal sequence occupies residues 1 to 22; the sequence is MGYLKGFALYISILILIVFIAG. Cys23 carries N-palmitoyl cysteine lipidation. A lipid anchor (S-diacylglycerol cysteine) is attached at Cys23.

The protein belongs to the staphylococcal tandem lipoprotein family.

Its subcellular location is the cell membrane. This is an uncharacterized protein from Staphylococcus aureus (strain MSSA476).